The chain runs to 967 residues: Leucine--tRNA ligase (967 aa).

The short motif at 43-53 (PYLSGHLHVGH) is the 'HIGH' region element. A 'KMSKS' region motif is present at residues 650–654 (KMSKS). Lys-653 contributes to the ATP binding site.

Belongs to the class-I aminoacyl-tRNA synthetase family.

It is found in the cytoplasm. The enzyme catalyses tRNA(Leu) + L-leucine + ATP = L-leucyl-tRNA(Leu) + AMP + diphosphate. The chain is Leucine--tRNA ligase from Pyrococcus furiosus (strain ATCC 43587 / DSM 3638 / JCM 8422 / Vc1).